We begin with the raw amino-acid sequence, 603 residues long: MCSISQKVVIGLNKAAANNNLQNLDRRGFKTRCVSSSKAASCLRASCSLQLDVKPAQEGRRSGNYQPSIWDFNYVQSLNTPYKEERYLTRHAELIVQVKPLLEKKMEAAQQLELIDDLNNLGLSYFFQDRIKQILSFIYDENQCFHSNINDQAEKRDLYFTALGFKLLRQHGFDVSQEVFDCFKNDNGSDFKASLSDNTKGLLQLYEASFLVREGEDTLEQARQFATKFLRRKLDEIDDNHLLSCIHHSLEIPLHWRIQRLEARWFLDAYATRHDMNPAILELAKLDFNIIQATHQEELKDVSRWWQNTRLAEKLPFVRDRLVESYFWAIALFEPHQYGYQRRVAAKIITLATSIDDVYDIYGTLDELQLFTDNFRRWDTESLGIPPYSMQLFYMVIHNFVSELACEILKEKGFIVIPYLQRSWIDLAESFLKEANWYYSGYTPSLEEYIDNGSVSIGAVAVLSQVYFTLANSIEKPKIESMYKYHHILRLSGLLVRLHDDLGTSLFEKKRGDVPKAVEICMKERNVTEEEAEEHVKYLIREAWKEMNTATAAAGCPFMDELNVAAANLGRAAQFVYLDGDGHGVQHSKIHQQMGGLMFEPYL.

The transit peptide at 1–35 (MCSISQKVVIGLNKAAANNNLQNLDRRGFKTRCVS) directs the protein to the chloroplast. (2E)-geranyl diphosphate is bound by residues Arg-319, Asp-356, Asp-360, Arg-497, and Asp-500. Mg(2+) contacts are provided by Asp-356 and Asp-360. Positions 356 to 360 (DDVYD) match the DDXXD motif motif. Positions 500, 504, and 508 each coordinate Mg(2+).

It belongs to the terpene synthase family. Tpsb subfamily. In terms of assembly, monomer. Mg(2+) serves as cofactor. It depends on Mn(2+) as a cofactor.

It is found in the plastid. It localises to the chloroplast. The enzyme catalyses (2E)-geranyl diphosphate + H2O = (2E)-geraniol + diphosphate. The protein operates within secondary metabolite biosynthesis; terpenoid biosynthesis. Functionally, monoterpene synthase (mono-TPS) involved in the biosynthesis of monoterpenes natural products. Catalyzes the conversion of (2E)-geranyl diphosphate (GPP) into geraniol. The chain is Geraniol synthase Tps-5073G30, chloroplastic from Perilla frutescens (Beefsteak mint).